Reading from the N-terminus, the 644-residue chain is Threonine--tRNA ligase (644 aa).

Positions 1–61 constitute a TGS domain; that stretch reads MPDIQLPDGS…DQDAEVAIVT (61 aa). The tract at residues 242–535 is catalytic; it reads DHRRIGTELE…LIEHYEGKFP (294 aa). Zn(2+)-binding residues include Cys335, His386, and His512.

The protein belongs to the class-II aminoacyl-tRNA synthetase family. Homodimer. It depends on Zn(2+) as a cofactor.

It localises to the cytoplasm. It carries out the reaction tRNA(Thr) + L-threonine + ATP = L-threonyl-tRNA(Thr) + AMP + diphosphate + H(+). Catalyzes the attachment of threonine to tRNA(Thr) in a two-step reaction: L-threonine is first activated by ATP to form Thr-AMP and then transferred to the acceptor end of tRNA(Thr). Also edits incorrectly charged L-seryl-tRNA(Thr). The chain is Threonine--tRNA ligase from Acidithiobacillus ferrooxidans (strain ATCC 23270 / DSM 14882 / CIP 104768 / NCIMB 8455) (Ferrobacillus ferrooxidans (strain ATCC 23270)).